The chain runs to 1137 residues: Calcium-activated potassium channel subunit alpha-1 (1137 aa).

Topologically, residues 1 to 44 (MSNNINANNLNTDSSSSPVNVPKMDALIIPVTMEVPCDSRGQRM) are extracellular. The chain crosses the membrane as a helical span at residues 45 to 65 (WWAFLASSMVTFFGGLFIILL). At 66 to 137 (WRTLKYLWTV…MISAQTLTGR (72 aa)) the chain is on the cytoplasmic side. A helical transmembrane segment spans residues 138–158 (VLVVLVFALSIGALVIYFIDS). Residues 159-173 (SNPIESCQNFYKDFT) are Extracellular-facing. The helical transmembrane segment at 174-194 (LQIDMAFNVFFLLYFGLRFIA) threads the bilayer. The Cytoplasmic portion of the chain corresponds to 195–198 (ANDK). Residues 199–219 (LWFWLEVNSVVDFFTVPPVFV) form a helical membrane-spanning segment. The Extracellular segment spans residues 220–223 (SVYL). A helical; Voltage-sensor membrane pass occupies residues 224 to 244 (NRSWLGLRFLRALRLIQFSEI). The Cytoplasmic portion of the chain corresponds to 245-259 (LQFLNILKTSNSIKL). A helical membrane pass occupies residues 260–280 (VNLCSIFISTWLTAAGFIHLV). The Extracellular segment spans residues 281–294 (ENSGDPWENFQNNQ). The pore-forming intramembrane region spans 295 to 317 (QLTYWECVYLLMVTMSTVGYGDV). Positions 311–314 (TVGY) match the Selectivity for potassium motif. The Extracellular segment spans residues 318 to 326 (YAKTTLGRL). A helical membrane pass occupies residues 327–347 (FMVFFILGGLAMFASYVPEII). Residues 348–1137 (ELIGNRKKYG…KQKYVQEDRL (790 aa)) are Cytoplasmic-facing. In terms of domain architecture, RCK N-terminal 1 spans 366-508 (RKHIVVCGHI…WNWKEGDDAI (143 aa)). Mg(2+)-binding residues include Glu398, Gln421, and Glu423. Positions 515-535 (LGFIAQSCLAPGLSTMLANLF) are segment S7. The segment S8 stretch occupies residues 572 to 592 (LSFPAVCELVFAKLKLLMIAI). A heme-binding motif region spans residues 636-640 (CKACH). The segment at 660–688 (EQPSTLSPKKKQRNGGMRNSPNSSPKLMR) is disordered. Residues 738 to 758 (VLSGHVVVCIFGDVKSALIGL) are segment S9. One can recognise an RCK N-terminal 2 domain in the interval 740–884 (SGHVVVCIFG…MDRSSPDNSP (145 aa)). A Calcium bowl motif is present at residues 904-926 (TELVNDSNVQFLDQDDDDDPDTE). Residues Gln913, Asp916, Asp919, and Asp921 each coordinate Ca(2+). A segment S10 region spans residues 933–953 (FACGTAFAVSVLDSLMSATYF). Residues 1088-1112 (ASLSHSSHSSYSSSKKSSSVHSIPS) show a composition bias toward low complexity. The tract at residues 1088–1137 (ASLSHSSHSSYSSSKKSSSVHSIPSTANRPNRTKTRDSREKQKYVQEDRL) is disordered. Positions 1121–1137 (KTRDSREKQKYVQEDRL) are enriched in basic and acidic residues.

The protein belongs to the potassium channel family. Calcium-activated (TC 1.A.1.3) subfamily. KCa1.1/KCNMA1 sub-subfamily. As to quaternary structure, homotetramer; which constitutes the calcium-activated potassium channel.

It is found in the cell membrane. The enzyme catalyses K(+)(in) = K(+)(out). Its activity is regulated as follows. Ethanol and carbon monoxide-bound heme increase channel activation. Heme inhibits channel activation. Potassium channel activated by both membrane depolarization or increase in cytosolic Ca(2+) that mediates export of K(+). It is also activated by the concentration of cytosolic Mg(2+). Its activation dampens the excitatory events that elevate the cytosolic Ca(2+) concentration and/or depolarize the cell membrane. It therefore contributes to repolarization of the membrane potential. Plays a key role in controlling excitability in a number of systems, such as regulation of the contraction of smooth muscle, the tuning of hair cells in the cochlea, regulation of transmitter release, and innate immunity. In smooth muscles, its activation by high level of Ca(2+), caused by ryanodine receptors in the sarcoplasmic reticulum, regulates the membrane potential. In cochlea cells, its number and kinetic properties partly determine the characteristic frequency of each hair cell and thereby helps to establish a tonotopic map. Highly sensitive to both iberiotoxin (IbTx) and charybdotoxin (CTX). The protein is Calcium-activated potassium channel subunit alpha-1 (KCNMA1) of Gallus gallus (Chicken).